The following is a 96-amino-acid chain: Small ribosomal subunit protein bS16 (96 aa).

It belongs to the bacterial ribosomal protein bS16 family.

The sequence is that of Small ribosomal subunit protein bS16 from Vesicomyosocius okutanii subsp. Calyptogena okutanii (strain HA).